The chain runs to 628 residues: MFNLRNFDVIVVGAGHAGTEAAMASSRMGCKTLLLTQKISDLGALSCNPAIGGIGKSHLVKEIDALGGMMAKAIDYSGIQFRILNSSKGPAVRSTRAQADKILYHETVKKILKKQNNLLILEAEVKDLIFKNYSVVGVLTQNEINFYSRSVVLAAGTFLGGKIHIGLKSYSAGRIGDKSAIDLSVRLRELSLRVNRLKTGTPPRIDINTVNFNNLLIQNSDTPVPVFSFMGNVSHHPKQIPCYLTHTNEKTHEIIRKNLDKSPIYTGFLKGLGPRYCPSIEDKIVRFPDRKSHQVFLEPEGLSSIKVYPNGISTSLPIEVQEQIVASIKGLEKSKIIRPGYAIEYDFFDPKDLNLTLESKLIKGLFFAGQINGTTGYEEAASQGLLAGLNAALSSKNTEGWFPRRDQAYLGVLIDDLTTQGTEEPYRMFTSRAEYRLSLREDNADLRLTEIGRKLGLVNDSRWIRYNQKVLNIQTEMNRLKKNKISPISPDADILKKLYNISLIKEISMSELLKRPQIRYQDLQSLESFRTGIVDLEAIGQIENEIKYAGYIKRQSEEIERHLKNENTFLSSICDYNKIRGLSSEVVKKLNDYKPISIGQASRISGITPAAISILLIHLKKESYKHTL.

An FAD-binding site is contributed by 13 to 18 (GAGHAG). 273–287 (GPRYCPSIEDKIVRF) is a binding site for NAD(+).

This sequence belongs to the MnmG family. As to quaternary structure, homodimer. Heterotetramer of two MnmE and two MnmG subunits. FAD serves as cofactor.

It is found in the cytoplasm. NAD-binding protein involved in the addition of a carboxymethylaminomethyl (cmnm) group at the wobble position (U34) of certain tRNAs, forming tRNA-cmnm(5)s(2)U34. This chain is tRNA uridine 5-carboxymethylaminomethyl modification enzyme MnmG, found in Buchnera aphidicola subsp. Acyrthosiphon pisum (strain 5A).